Consider the following 193-residue polypeptide: Ribosome maturation factor RimM (193 aa).

In terms of domain architecture, PRC barrel spans 97-172 (DDEFYLTDLV…LILADPPALV (76 aa)). The segment at 168-193 (PPALVGDHEGPEEKGLDENEELGDRD) is disordered. A compositionally biased stretch (basic and acidic residues) spans 173 to 193 (GDHEGPEEKGLDENEELGDRD).

This sequence belongs to the RimM family. In terms of assembly, binds ribosomal protein uS19.

The protein localises to the cytoplasm. Its function is as follows. An accessory protein needed during the final step in the assembly of 30S ribosomal subunit, possibly for assembly of the head region. Essential for efficient processing of 16S rRNA. May be needed both before and after RbfA during the maturation of 16S rRNA. It has affinity for free ribosomal 30S subunits but not for 70S ribosomes. This is Ribosome maturation factor RimM from Caulobacter vibrioides (strain ATCC 19089 / CIP 103742 / CB 15) (Caulobacter crescentus).